The sequence spans 274 residues: 3-methyl-2-oxobutanoate hydroxymethyltransferase (274 aa).

Positions 49 and 88 each coordinate Mg(2+). 3-methyl-2-oxobutanoate is bound by residues D49–S50, D88, and K118. Mg(2+) is bound at residue E120. E187 serves as the catalytic Proton acceptor.

This sequence belongs to the PanB family. Homodecamer; pentamer of dimers. Mg(2+) is required as a cofactor.

Its subcellular location is the cytoplasm. The enzyme catalyses 3-methyl-2-oxobutanoate + (6R)-5,10-methylene-5,6,7,8-tetrahydrofolate + H2O = 2-dehydropantoate + (6S)-5,6,7,8-tetrahydrofolate. It functions in the pathway cofactor biosynthesis; (R)-pantothenate biosynthesis; (R)-pantoate from 3-methyl-2-oxobutanoate: step 1/2. In terms of biological role, catalyzes the reversible reaction in which hydroxymethyl group from 5,10-methylenetetrahydrofolate is transferred onto alpha-ketoisovalerate to form ketopantoate. The protein is 3-methyl-2-oxobutanoate hydroxymethyltransferase of Nitrobacter winogradskyi (strain ATCC 25391 / DSM 10237 / CIP 104748 / NCIMB 11846 / Nb-255).